The sequence spans 417 residues: Acid phosphatase (417 aa).

The first 19 residues, 1–19 (MFTKQSLVTLLGGLSLAVA), serve as a signal peptide directing secretion. Asn-122, Asn-187, and Asn-209 each carry an N-linked (GlcNAc...) asparagine glycan. The Proton donor role is filled by Asp-216. N-linked (GlcNAc...) asparagine glycosylation is found at Asn-218, Asn-333, and Asn-383.

The N-terminus is blocked.

Its subcellular location is the secreted. It catalyses the reaction a phosphate monoester + H2O = an alcohol + phosphate. The polypeptide is Acid phosphatase (phoA) (Aspergillus niger).